A 339-amino-acid polypeptide reads, in one-letter code: Phenylalanine--tRNA ligase alpha subunit (339 aa).

Over residues 1–14 the composition is skewed to basic and acidic residues; sequence MEAKLKQLEEKAKQ. Residues 1-20 are disordered; sequence MEAKLKQLEEKAKQDIQAST. Position 254 (glutamate 254) interacts with Mg(2+).

This sequence belongs to the class-II aminoacyl-tRNA synthetase family. Phe-tRNA synthetase alpha subunit type 1 subfamily. In terms of assembly, tetramer of two alpha and two beta subunits. The cofactor is Mg(2+).

It localises to the cytoplasm. The enzyme catalyses tRNA(Phe) + L-phenylalanine + ATP = L-phenylalanyl-tRNA(Phe) + AMP + diphosphate + H(+). In Alkaliphilus metalliredigens (strain QYMF), this protein is Phenylalanine--tRNA ligase alpha subunit.